Consider the following 373-residue polypeptide: SH3 domain-binding protein 5-like (373 aa).

The disordered stretch occupies residues Met1–Ser36. Coiled-coil stretches lie at residues Ala35–Arg98 and Trp170–Tyr258. 2 disordered regions span residues Ala274–Thr308 and Asp332–Leu373. Basic and acidic residues predominate over residues Asp332–Gly360.

Belongs to the SH3BP5 family.

Its function is as follows. Functions as a guanine nucleotide exchange factor (GEF) for rab11a. This chain is SH3 domain-binding protein 5-like (sh3bp5l), found in Xenopus laevis (African clawed frog).